A 424-amino-acid polypeptide reads, in one-letter code: Histidine--tRNA ligase (424 aa).

It belongs to the class-II aminoacyl-tRNA synthetase family. As to quaternary structure, homodimer.

The protein resides in the cytoplasm. It carries out the reaction tRNA(His) + L-histidine + ATP = L-histidyl-tRNA(His) + AMP + diphosphate + H(+). The chain is Histidine--tRNA ligase from Salmonella paratyphi B (strain ATCC BAA-1250 / SPB7).